A 342-amino-acid polypeptide reads, in one-letter code: RNA 3'-terminal phosphate cyclase (342 aa).

ATP-binding positions include Gln-103 and 283–287 (YLADQ). His-308 acts as the Tele-AMP-histidine intermediate in catalysis.

Belongs to the RNA 3'-terminal cyclase family. Type 1 subfamily.

It localises to the cytoplasm. The enzyme catalyses a 3'-end 3'-phospho-ribonucleotide-RNA + ATP = a 3'-end 2',3'-cyclophospho-ribonucleotide-RNA + AMP + diphosphate. In terms of biological role, catalyzes the conversion of 3'-phosphate to a 2',3'-cyclic phosphodiester at the end of RNA. The mechanism of action of the enzyme occurs in 3 steps: (A) adenylation of the enzyme by ATP; (B) transfer of adenylate to an RNA-N3'P to produce RNA-N3'PP5'A; (C) and attack of the adjacent 2'-hydroxyl on the 3'-phosphorus in the diester linkage to produce the cyclic end product. The biological role of this enzyme is unknown but it is likely to function in some aspects of cellular RNA processing. This Escherichia coli O157:H7 protein is RNA 3'-terminal phosphate cyclase (rtcA).